The following is a 209-amino-acid chain: MHNKNLDCTLYLVTDRDILKGRDLKKVLEEAILGGTTLVQLREKNVSSKEFYEIAKDIKVITDKYNIPLIINDRVDIALAVNAEGIHIGQKDLPANIVRKIIGEDKILGVSANTIEDALKAQRDGADYLGVGAIFPTNSKKDAESTSIETLKEIKNAVNIPIVAIGGINENNVQKLKETNIDGIAVISTILGKEDVKKACEELTGFFNE.

Residues 40-44 (QLREK) and Asn-72 each bind 4-amino-2-methyl-5-(diphosphooxymethyl)pyrimidine. Mg(2+) is bound by residues Asp-73 and Asp-92. Residue Ser-111 participates in 4-amino-2-methyl-5-(diphosphooxymethyl)pyrimidine binding. Residue 137–139 (TNS) coordinates 2-[(2R,5Z)-2-carboxy-4-methylthiazol-5(2H)-ylidene]ethyl phosphate. Lys-140 contributes to the 4-amino-2-methyl-5-(diphosphooxymethyl)pyrimidine binding site. Residues Gly-167 and 187-188 (IS) contribute to the 2-[(2R,5Z)-2-carboxy-4-methylthiazol-5(2H)-ylidene]ethyl phosphate site.

Belongs to the thiamine-phosphate synthase family. Mg(2+) serves as cofactor.

The catalysed reaction is 2-[(2R,5Z)-2-carboxy-4-methylthiazol-5(2H)-ylidene]ethyl phosphate + 4-amino-2-methyl-5-(diphosphooxymethyl)pyrimidine + 2 H(+) = thiamine phosphate + CO2 + diphosphate. It carries out the reaction 2-(2-carboxy-4-methylthiazol-5-yl)ethyl phosphate + 4-amino-2-methyl-5-(diphosphooxymethyl)pyrimidine + 2 H(+) = thiamine phosphate + CO2 + diphosphate. The enzyme catalyses 4-methyl-5-(2-phosphooxyethyl)-thiazole + 4-amino-2-methyl-5-(diphosphooxymethyl)pyrimidine + H(+) = thiamine phosphate + diphosphate. It participates in cofactor biosynthesis; thiamine diphosphate biosynthesis; thiamine phosphate from 4-amino-2-methyl-5-diphosphomethylpyrimidine and 4-methyl-5-(2-phosphoethyl)-thiazole: step 1/1. Its function is as follows. Condenses 4-methyl-5-(beta-hydroxyethyl)thiazole monophosphate (THZ-P) and 2-methyl-4-amino-5-hydroxymethyl pyrimidine pyrophosphate (HMP-PP) to form thiamine monophosphate (TMP). In Clostridium tetani (strain Massachusetts / E88), this protein is Thiamine-phosphate synthase.